A 158-amino-acid polypeptide reads, in one-letter code: Cyclic pyranopterin monophosphate synthase (158 aa).

Substrate contacts are provided by residues 76–78 (LCH) and 114–115 (ME). Asp-129 is a catalytic residue.

Belongs to the MoaC family. Homohexamer; trimer of dimers.

It catalyses the reaction (8S)-3',8-cyclo-7,8-dihydroguanosine 5'-triphosphate = cyclic pyranopterin phosphate + diphosphate. It functions in the pathway cofactor biosynthesis; molybdopterin biosynthesis. Functionally, catalyzes the conversion of (8S)-3',8-cyclo-7,8-dihydroguanosine 5'-triphosphate to cyclic pyranopterin monophosphate (cPMP). The protein is Cyclic pyranopterin monophosphate synthase of Shewanella piezotolerans (strain WP3 / JCM 13877).